A 438-amino-acid chain; its full sequence is 5-methylthioadenosine/S-adenosylhomocysteine deaminase (438 aa).

The Zn(2+) site is built by H66 and H68. Positions 95, 148, and 188 each coordinate substrate. H215 lines the Zn(2+) pocket. 2 residues coordinate substrate: E218 and D305. D305 is a Zn(2+) binding site.

Belongs to the metallo-dependent hydrolases superfamily. MTA/SAH deaminase family. It depends on Zn(2+) as a cofactor.

The catalysed reaction is S-adenosyl-L-homocysteine + H2O + H(+) = S-inosyl-L-homocysteine + NH4(+). It catalyses the reaction S-methyl-5'-thioadenosine + H2O + H(+) = S-methyl-5'-thioinosine + NH4(+). Catalyzes the deamination of 5-methylthioadenosine and S-adenosyl-L-homocysteine into 5-methylthioinosine and S-inosyl-L-homocysteine, respectively. Is also able to deaminate adenosine. The sequence is that of 5-methylthioadenosine/S-adenosylhomocysteine deaminase from Halalkalibacterium halodurans (strain ATCC BAA-125 / DSM 18197 / FERM 7344 / JCM 9153 / C-125) (Bacillus halodurans).